The primary structure comprises 323 residues: MIFSTLEHILTHISFSVVSIVISIHLITLFVNQIVGFYDSSKKGMIITFLCITGLLITRWFFSGHLPFSDLYESLIFLSWGFSIFYMVPRFKKQKNDLSTIIAPSVIFTQGFATSGLLTEMHQSVILVPALQSHWLMMHVSMMILGYAALLCGSLLSVAILVITFQELIPILGKSKRLSFLYESFDYAEIKYINMNERNNVLRKTSFSSYRNYYRYQFIQQLDRWGYRIISLGFIFLTIGILSGAVWANEAWGSYWNWDPKETWAFITWTIFAIYLHSRKNKKLEGLNSSIVASIGFLIIWICYFGVNLLGIGLHNYGSFTSN.

The next 8 helical transmembrane spans lie at 17–37 (VVSI…IVGF), 44–64 (GMII…FFSG), 68–88 (FSDL…FYMV), 98–118 (LSTI…SGLL), 143–163 (MILG…ILVI), 229–249 (IISL…VWAN), 262–279 (ETWA…LHSR), and 291–311 (IVAS…NLLG).

The protein belongs to the CcmF/CycK/Ccl1/NrfE/CcsA family. In terms of assembly, may interact with Ccs1.

The protein localises to the plastid. It localises to the chloroplast thylakoid membrane. Required during biogenesis of c-type cytochromes (cytochrome c6 and cytochrome f) at the step of heme attachment. This Lotus japonicus (Lotus corniculatus var. japonicus) protein is Cytochrome c biogenesis protein CcsA.